Here is a 193-residue protein sequence, read N- to C-terminus: Acyl carrier protein phosphodiesterase (193 aa).

Belongs to the AcpH family.

It catalyses the reaction holo-[ACP] + H2O = apo-[ACP] + (R)-4'-phosphopantetheine + H(+). Converts holo-ACP to apo-ACP by hydrolytic cleavage of the phosphopantetheine prosthetic group from ACP. This is Acyl carrier protein phosphodiesterase from Salmonella paratyphi A (strain ATCC 9150 / SARB42).